A 332-amino-acid polypeptide reads, in one-letter code: DNA-directed RNA polymerase subunit alpha (332 aa).

The segment at 1 to 232 is alpha N-terminal domain (alpha-NTD); the sequence is MKGYLKDFLK…DQLSVFVDLE (232 aa). An alpha C-terminal domain (alpha-CTD) region spans residues 247 to 332; it reads IDPVLLRPID…SLGDRARIAG (86 aa).

Belongs to the RNA polymerase alpha chain family. In terms of assembly, homodimer. The RNAP catalytic core consists of 2 alpha, 1 beta, 1 beta' and 1 omega subunit. When a sigma factor is associated with the core the holoenzyme is formed, which can initiate transcription.

It catalyses the reaction RNA(n) + a ribonucleoside 5'-triphosphate = RNA(n+1) + diphosphate. Its function is as follows. DNA-dependent RNA polymerase catalyzes the transcription of DNA into RNA using the four ribonucleoside triphosphates as substrates. This chain is DNA-directed RNA polymerase subunit alpha, found in Halorhodospira halophila (strain DSM 244 / SL1) (Ectothiorhodospira halophila (strain DSM 244 / SL1)).